A 593-amino-acid polypeptide reads, in one-letter code: Methionine--tRNA ligase, mitochondrial (593 aa).

The N-terminal 29 residues, 1 to 29, are a transit peptide targeting the mitochondrion; it reads MLRTSVLRLLGRTGASRLSLLEDFGPRYY. The 'HIGH' region motif lies at 52–62; it reads FYVNAAPHIGH. A 'KMSKS' region motif is present at residues 347–351; that stretch reads KMSKS. Lysine 350 lines the ATP pocket.

It belongs to the class-I aminoacyl-tRNA synthetase family.

Its subcellular location is the mitochondrion matrix. It carries out the reaction tRNA(Met) + L-methionine + ATP = L-methionyl-tRNA(Met) + AMP + diphosphate. The chain is Methionine--tRNA ligase, mitochondrial (MARS2) from Homo sapiens (Human).